A 119-amino-acid chain; its full sequence is MPFPVPDPFVWDTSFQVFYFELDEKHRGIFQALFALGNDNNPSNLKLLYRVTANHFAEEEGFMQTANYGGYRSHKVLHEDFLAKLRSFKAPVPDKDVYFAKDWLVQHIKTIDFKYKNLL.

Fe cation contacts are provided by histidine 26, histidine 55, glutamate 59, histidine 74, histidine 78, histidine 107, and aspartate 112.

The protein belongs to the hemerythrin family.

Functionally, hemerythrin is a respiratory protein in blood cells of certain marine worms. The oxygen-binding site in each chain contains two iron atoms. The sequence is that of Hemerythrin subunit A from Sipunculus nudus (Sipunculan worm).